The following is a 204-amino-acid chain: Holliday junction branch migration complex subunit RuvA (204 aa).

The interval 1 to 67 is domain I; that stretch reads MIGYLEGKIL…QPKPVLIGFN (67 aa). Residues 68-145 are domain II; that stretch reads SLEEREFFER…VFAGEHGGEP (78 aa). Residues 146 to 156 form a flexible linker region; sequence AGPAPVEENFH. The interval 156-204 is domain III; sequence HLLVLDVLVNQLGHKAAEAKELINQAIKRNPAISSPEELFDEVYRGETG.

Belongs to the RuvA family. In terms of assembly, homotetramer. Forms an RuvA(8)-RuvB(12)-Holliday junction (HJ) complex. HJ DNA is sandwiched between 2 RuvA tetramers; dsDNA enters through RuvA and exits via RuvB. An RuvB hexamer assembles on each DNA strand where it exits the tetramer. Each RuvB hexamer is contacted by two RuvA subunits (via domain III) on 2 adjacent RuvB subunits; this complex drives branch migration. In the full resolvosome a probable DNA-RuvA(4)-RuvB(12)-RuvC(2) complex forms which resolves the HJ.

Its subcellular location is the cytoplasm. Its function is as follows. The RuvA-RuvB-RuvC complex processes Holliday junction (HJ) DNA during genetic recombination and DNA repair, while the RuvA-RuvB complex plays an important role in the rescue of blocked DNA replication forks via replication fork reversal (RFR). RuvA specifically binds to HJ cruciform DNA, conferring on it an open structure. The RuvB hexamer acts as an ATP-dependent pump, pulling dsDNA into and through the RuvAB complex. HJ branch migration allows RuvC to scan DNA until it finds its consensus sequence, where it cleaves and resolves the cruciform DNA. This Desulfatibacillum aliphaticivorans protein is Holliday junction branch migration complex subunit RuvA.